We begin with the raw amino-acid sequence, 215 residues long: Pyrrolidone-carboxylate peptidase (215 aa).

Active-site residues include Glu80, Cys143, and His167.

It belongs to the peptidase C15 family. Homotetramer.

The protein localises to the cytoplasm. The enzyme catalyses Release of an N-terminal pyroglutamyl group from a polypeptide, the second amino acid generally not being Pro.. Functionally, removes 5-oxoproline from various penultimate amino acid residues except L-proline. The sequence is that of Pyrrolidone-carboxylate peptidase from Bacillus cytotoxicus (strain DSM 22905 / CIP 110041 / 391-98 / NVH 391-98).